Reading from the N-terminus, the 282-residue chain is DNA-directed RNA polymerase III subunit RPC5 (282 aa).

The disordered stretch occupies residues 1–70; sequence MSIDNKLFVT…TGEEEEDDPV (70 aa). Acidic residues-rich tracts occupy residues 10–35 and 60–70; these read TEED…DMIA and DTGEEEEDDPV. Position 61 is a phosphothreonine (Thr-61).

In terms of assembly, component of the RNA polymerase III (Pol III) complex consisting of 17 subunits. Interacts with RPC53/RPC4. RPC53/RPC4, RPC37/RPC5 and RPC11/RPC10 probably form a Pol III subcomplex.

The protein localises to the nucleus. In terms of biological role, DNA-dependent RNA polymerase catalyzes the transcription of DNA into RNA using the four ribonucleoside triphosphates as substrates. Specific peripheric component of RNA polymerase III which synthesizes small RNAs, such as 5S rRNA and tRNAs. The RPC53/RPC4-RPC37/RPC5 subcomplex is required for terminator recognition and reinitiation. This chain is DNA-directed RNA polymerase III subunit RPC5 (RPC37), found in Saccharomyces cerevisiae (strain ATCC 204508 / S288c) (Baker's yeast).